The chain runs to 482 residues: tRNA sulfurtransferase (482 aa).

Positions 61 to 165 (LVIRDALTRI…DDRLLLIKGR (105 aa)) constitute a THUMP domain. ATP is bound by residues 183–184 (LI), Lys265, Gly287, and Gln296. A disulfide bridge connects residues Cys344 and Cys456. The Rhodanese domain maps to 404–482 (FGPNDVILDI…GFANVKVYRP (79 aa)). The active-site Cysteine persulfide intermediate is Cys456.

Belongs to the ThiI family.

It localises to the cytoplasm. It catalyses the reaction [ThiI sulfur-carrier protein]-S-sulfanyl-L-cysteine + a uridine in tRNA + 2 reduced [2Fe-2S]-[ferredoxin] + ATP + H(+) = [ThiI sulfur-carrier protein]-L-cysteine + a 4-thiouridine in tRNA + 2 oxidized [2Fe-2S]-[ferredoxin] + AMP + diphosphate. It carries out the reaction [ThiS sulfur-carrier protein]-C-terminal Gly-Gly-AMP + S-sulfanyl-L-cysteinyl-[cysteine desulfurase] + AH2 = [ThiS sulfur-carrier protein]-C-terminal-Gly-aminoethanethioate + L-cysteinyl-[cysteine desulfurase] + A + AMP + 2 H(+). The protein operates within cofactor biosynthesis; thiamine diphosphate biosynthesis. Functionally, catalyzes the ATP-dependent transfer of a sulfur to tRNA to produce 4-thiouridine in position 8 of tRNAs, which functions as a near-UV photosensor. Also catalyzes the transfer of sulfur to the sulfur carrier protein ThiS, forming ThiS-thiocarboxylate. This is a step in the synthesis of thiazole, in the thiamine biosynthesis pathway. The sulfur is donated as persulfide by IscS. This chain is tRNA sulfurtransferase, found in Salmonella typhimurium (strain LT2 / SGSC1412 / ATCC 700720).